A 687-amino-acid polypeptide reads, in one-letter code: Amine oxidase [copper-containing] gamma 2 (687 aa).

The signal sequence occupies residues 1-24; sequence MVELSFSQLLVLLLSLLFLFTTLA. The N-linked (GlcNAc...) asparagine glycan is linked to Asn154. A disulfide bridge links Cys169 with Cys191. Asn244 carries an N-linked (GlcNAc...) asparagine glycan. Residue 333–344 coordinates substrate; sequence YMDAGEFGLGPS. Asp335 functions as the Proton acceptor in the catalytic mechanism. Cys354 and Cys380 are joined by a disulfide. Residue 420–425 participates in substrate binding; it reads VGNYDY. Residue Tyr423 is the Schiff-base intermediate with substrate; via topaquinone of the active site. A 2',4',5'-topaquinone modification is found at Tyr423. Residues His480 and His482 each coordinate Cu cation. Mn(2+) is bound by residues Asp489, Met490, and Asp491. Residues Asn497 and Asn598 are each glycosylated (N-linked (GlcNAc...) asparagine). The Mn(2+) site is built by Asp632 and Ile633. His643 is a binding site for Cu cation.

This sequence belongs to the copper/topaquinone oxidase family. As to quaternary structure, homodimer. The cofactor is Cu cation. Zn(2+) serves as cofactor. Requires L-topaquinone as cofactor. It depends on Mn(2+) as a cofactor. In terms of processing, topaquinone (TPQ) is generated by copper-dependent autoxidation of a specific tyrosyl residue. In terms of tissue distribution, expressed in roots, leaves and cotyledons.

It is found in the secreted. Its subcellular location is the extracellular space. The protein localises to the apoplast. It catalyses the reaction a primary methyl amine + O2 + H2O = an aldehyde + H2O2 + NH4(+). It functions in the pathway amine and polyamine degradation; putrescine degradation. Its function is as follows. Copper amine oxidase that can use putrescine and spermidine as substrates. The sequence is that of Amine oxidase [copper-containing] gamma 2 from Arabidopsis thaliana (Mouse-ear cress).